A 613-amino-acid polypeptide reads, in one-letter code: Probable hydrolase clz13 (613 aa).

Positions 1-25 (MCLLSMRFTVAILLVLLSHCGGSHA) are cleaved as a signal peptide. 7 N-linked (GlcNAc...) asparagine glycosylation sites follow: N61, N89, N286, N422, N456, N477, and N581.

The protein belongs to the beta-lactamase family.

Its pathway is secondary metabolite biosynthesis. Probable hydrolase; part of the gene cluster that mediates the biosynthesis of squalestatin S1 (SQS1, also known as zaragozic acid A), a heavily oxidized fungal polyketide that offers potent cholesterol lowering activity by targeting squalene synthase (SS). SQS1 is composed of a 2,8-dioxobicyclic[3.2.1]octane-3,4,5-tricarboxyclic acid core that is connected to two lipophilic polyketide arms. These initial steps feature the priming of an unusual benzoic acid starter unit onto the highly reducing polyketide synthase clz14, followed by oxaloacetate extension and product release to generate a tricarboxylic acid containing product. The phenylalanine ammonia lyase (PAL) clz10 and the acyl-CoA ligase clz12 are involved in transforming phenylalanine into benzoyl-CoA. The citrate synthase-like protein clz17 is involved in connecting the C-alpha-carbons of the hexaketide chain and oxaloacetate to afford the tricarboxylic acid unit. The potential hydrolytic enzymes, clz11 and clz13, are in close proximity to pks2 and may participate in product release. On the other side, the tetraketide arm is synthesized by a the squalestatin tetraketide synthase clz2 and enzymatically esterified to the core in the last biosynthetic step, by the acetyltransferase clz6. The biosynthesis of the tetraketide must involve 3 rounds of chain extension. After the first and second rounds methyl-transfer occurs, and in all rounds of extension the ketoreductase and dehydratase are active. The enoyl reductase and C-MeT of clz2 are not active in the final round of extension. The acetyltransferase clz6 appears to have a broad substrate selectivity for its acyl CoA substrate, allowing the in vitro synthesis of novel squalestatins. The biosynthesis of SQS1 requires several oxidative steps likely performed by oxidoreductases clz3, clz15 and clz16. Finally, in support of the identification of the cluster as being responsible for SQS1 production, the cluster contains a gene encoding a putative squalene synthase (SS) clz20, suggesting a likely mechanism for self-resistance. This Cochliobolus lunatus (Filamentous fungus) protein is Probable hydrolase clz13.